The chain runs to 243 residues: Adenosylcobinamide-GDP ribazoletransferase (243 aa).

5 helical membrane passes run 31–51, 55–75, 109–129, 135–155, and 188–208; these read LLFY…FNAL, APLL…SGGL, IAVV…VALI, IGLL…FLGT, and VVLA…CFYW.

The protein belongs to the CobS family. Requires Mg(2+) as cofactor.

It is found in the cell inner membrane. It catalyses the reaction alpha-ribazole + adenosylcob(III)inamide-GDP = adenosylcob(III)alamin + GMP + H(+). It carries out the reaction alpha-ribazole 5'-phosphate + adenosylcob(III)inamide-GDP = adenosylcob(III)alamin 5'-phosphate + GMP + H(+). The protein operates within cofactor biosynthesis; adenosylcobalamin biosynthesis; adenosylcobalamin from cob(II)yrinate a,c-diamide: step 7/7. Joins adenosylcobinamide-GDP and alpha-ribazole to generate adenosylcobalamin (Ado-cobalamin). Also synthesizes adenosylcobalamin 5'-phosphate from adenosylcobinamide-GDP and alpha-ribazole 5'-phosphate. The chain is Adenosylcobinamide-GDP ribazoletransferase from Pseudomonas syringae pv. tomato (strain ATCC BAA-871 / DC3000).